The following is a 363-amino-acid chain: Dihydroorotate dehydrogenase (quinone) (363 aa).

Residues 62-66 (AGYDK) and threonine 86 each bind FMN. Lysine 66 is a binding site for substrate. Residue 111 to 115 (NRLGF) coordinates substrate. Residues asparagine 140 and asparagine 171 each coordinate FMN. Asparagine 171 is a binding site for substrate. The Nucleophile role is filled by serine 174. Asparagine 176 contributes to the substrate binding site. Residues lysine 216 and serine 244 each contribute to the FMN site. 245–246 (NT) contacts substrate. Residues glycine 267, glycine 296, and 317 to 318 (YS) each bind FMN.

This sequence belongs to the dihydroorotate dehydrogenase family. Type 2 subfamily. Monomer. It depends on FMN as a cofactor.

It is found in the cell membrane. It catalyses the reaction (S)-dihydroorotate + a quinone = orotate + a quinol. Its pathway is pyrimidine metabolism; UMP biosynthesis via de novo pathway; orotate from (S)-dihydroorotate (quinone route): step 1/1. Functionally, catalyzes the conversion of dihydroorotate to orotate with quinone as electron acceptor. The polypeptide is Dihydroorotate dehydrogenase (quinone) (Allorhizobium ampelinum (strain ATCC BAA-846 / DSM 112012 / S4) (Agrobacterium vitis (strain S4))).